The primary structure comprises 476 residues: Ribulose bisphosphate carboxylase large chain (476 aa).

A propeptide spanning residues 1–2 is cleaved from the precursor; sequence MS. P3 bears the N-acetylproline mark. An N6,N6,N6-trimethyllysine modification is found at K14. Substrate is bound by residues N123 and T173. Catalysis depends on K175, which acts as the Proton acceptor. A substrate-binding site is contributed by K177. The Mg(2+) site is built by K201, D203, and E204. K201 bears the N6-carboxylysine mark. Catalysis depends on H294, which acts as the Proton acceptor. 3 residues coordinate substrate: R295, H327, and S379.

Belongs to the RuBisCO large chain family. Type I subfamily. Heterohexadecamer of 8 large chains and 8 small chains; disulfide-linked. The disulfide link is formed within the large subunit homodimers. It depends on Mg(2+) as a cofactor. In terms of processing, the disulfide bond which can form in the large chain dimeric partners within the hexadecamer appears to be associated with oxidative stress and protein turnover.

Its subcellular location is the plastid. It localises to the chloroplast. It carries out the reaction 2 (2R)-3-phosphoglycerate + 2 H(+) = D-ribulose 1,5-bisphosphate + CO2 + H2O. The catalysed reaction is D-ribulose 1,5-bisphosphate + O2 = 2-phosphoglycolate + (2R)-3-phosphoglycerate + 2 H(+). Functionally, ruBisCO catalyzes two reactions: the carboxylation of D-ribulose 1,5-bisphosphate, the primary event in carbon dioxide fixation, as well as the oxidative fragmentation of the pentose substrate in the photorespiration process. Both reactions occur simultaneously and in competition at the same active site. The chain is Ribulose bisphosphate carboxylase large chain from Phaseolus vulgaris (Kidney bean).